A 338-amino-acid chain; its full sequence is Ketol-acid reductoisomerase (NADP(+)) (338 aa).

Residues 1 to 181 form the KARI N-terminal Rossmann domain; sequence MQVYYDKDCD…GGGRTGIIET (181 aa). Residues 24–27, R47, S50, S52, and 82–85 each bind NADP(+); these read YGSQ and DEFQ. Residue H107 is part of the active site. Residue G133 coordinates NADP(+). The 146-residue stretch at 182-327 folds into the KARI C-terminal knotted domain; it reads TFKDETETDL…EKLRAMMPWI (146 aa). Positions 190, 194, 226, and 230 each coordinate Mg(2+). Substrate is bound at residue S251.

Belongs to the ketol-acid reductoisomerase family. The cofactor is Mg(2+).

It catalyses the reaction (2R)-2,3-dihydroxy-3-methylbutanoate + NADP(+) = (2S)-2-acetolactate + NADPH + H(+). The enzyme catalyses (2R,3R)-2,3-dihydroxy-3-methylpentanoate + NADP(+) = (S)-2-ethyl-2-hydroxy-3-oxobutanoate + NADPH + H(+). It functions in the pathway amino-acid biosynthesis; L-isoleucine biosynthesis; L-isoleucine from 2-oxobutanoate: step 2/4. Its pathway is amino-acid biosynthesis; L-valine biosynthesis; L-valine from pyruvate: step 2/4. Involved in the biosynthesis of branched-chain amino acids (BCAA). Catalyzes an alkyl-migration followed by a ketol-acid reduction of (S)-2-acetolactate (S2AL) to yield (R)-2,3-dihydroxy-isovalerate. In the isomerase reaction, S2AL is rearranged via a Mg-dependent methyl migration to produce 3-hydroxy-3-methyl-2-ketobutyrate (HMKB). In the reductase reaction, this 2-ketoacid undergoes a metal-dependent reduction by NADPH to yield (R)-2,3-dihydroxy-isovalerate. This chain is Ketol-acid reductoisomerase (NADP(+)), found in Teredinibacter turnerae (strain ATCC 39867 / T7901).